Consider the following 252-residue polypeptide: 2-succinyl-6-hydroxy-2,4-cyclohexadiene-1-carboxylate synthase (252 aa).

The protein belongs to the AB hydrolase superfamily. MenH family. In terms of assembly, monomer.

The enzyme catalyses 5-enolpyruvoyl-6-hydroxy-2-succinyl-cyclohex-3-ene-1-carboxylate = (1R,6R)-6-hydroxy-2-succinyl-cyclohexa-2,4-diene-1-carboxylate + pyruvate. Its pathway is quinol/quinone metabolism; 1,4-dihydroxy-2-naphthoate biosynthesis; 1,4-dihydroxy-2-naphthoate from chorismate: step 3/7. It functions in the pathway quinol/quinone metabolism; menaquinone biosynthesis. Catalyzes a proton abstraction reaction that results in 2,5-elimination of pyruvate from 2-succinyl-5-enolpyruvyl-6-hydroxy-3-cyclohexene-1-carboxylate (SEPHCHC) and the formation of 2-succinyl-6-hydroxy-2,4-cyclohexadiene-1-carboxylate (SHCHC). The protein is 2-succinyl-6-hydroxy-2,4-cyclohexadiene-1-carboxylate synthase of Klebsiella pneumoniae subsp. pneumoniae (strain ATCC 700721 / MGH 78578).